The sequence spans 541 residues: Peptide chain release factor 3 (541 aa).

The 270-residue stretch at 14 to 283 folds into the tr-type G domain; it reads EARRNFAIIS…AFLDYALKPG (270 aa). Residues 23–30, 91–95, and 145–148 each bind GTP; these read SHPDAGKT, DTPGH, and NKLD.

The protein belongs to the TRAFAC class translation factor GTPase superfamily. Classic translation factor GTPase family. PrfC subfamily.

It is found in the cytoplasm. Functionally, increases the formation of ribosomal termination complexes and stimulates activities of RF-1 and RF-2. It binds guanine nucleotides and has strong preference for UGA stop codons. It may interact directly with the ribosome. The stimulation of RF-1 and RF-2 is significantly reduced by GTP and GDP, but not by GMP. The chain is Peptide chain release factor 3 from Acaryochloris marina (strain MBIC 11017).